The chain runs to 414 residues: Eukaryotic initiation factor 4A-1 (414 aa).

The Q motif motif lies at 41–69; that stretch reads ESFDDMGLQENLLRGIYAYGFEKPSAIQQ. One can recognise a Helicase ATP-binding domain in the interval 72–242; the sequence is IVPFCKGLDV…RKFMNKPVRI (171 aa). 85–92 is an ATP binding site; sequence AQSGTGKT. The DEAD box motif lies at 190-193; sequence DEAD. Residues 253–414 form the Helicase C-terminal domain; the sequence is GIKQFYVNVE…ELPANVADLL (162 aa).

It belongs to the DEAD box helicase family. eIF4A subfamily. EIF4F is a multi-subunit complex, the composition of which varies with external and internal environmental conditions. It is composed of at least EIF4A, EIF4E and EIF4G.

The catalysed reaction is ATP + H2O = ADP + phosphate + H(+). Functionally, ATP-dependent RNA helicase which is a subunit of the eIF4F complex involved in cap recognition and is required for mRNA binding to ribosome. In the current model of translation initiation, eIF4A unwinds RNA secondary structures in the 5'-UTR of mRNAs which is necessary to allow efficient binding of the small ribosomal subunit, and subsequent scanning for the initiator codon. The sequence is that of Eukaryotic initiation factor 4A-1 from Oryza sativa subsp. japonica (Rice).